The sequence spans 181 residues: Large ribosomal subunit protein uL5 (181 aa).

Belongs to the universal ribosomal protein uL5 family. Part of the 50S ribosomal subunit; part of the 5S rRNA/L5/L18/L25 subcomplex. Contacts the 5S rRNA and the P site tRNA. Forms a bridge to the 30S subunit in the 70S ribosome.

This is one of the proteins that bind and probably mediate the attachment of the 5S RNA into the large ribosomal subunit, where it forms part of the central protuberance. In the 70S ribosome it contacts protein S13 of the 30S subunit (bridge B1b), connecting the 2 subunits; this bridge is implicated in subunit movement. Contacts the P site tRNA; the 5S rRNA and some of its associated proteins might help stabilize positioning of ribosome-bound tRNAs. This is Large ribosomal subunit protein uL5 from Desulforamulus reducens (strain ATCC BAA-1160 / DSM 100696 / MI-1) (Desulfotomaculum reducens).